We begin with the raw amino-acid sequence, 357 residues long: MYRILVINPGSSSTKVAVFEDEKKIAEKNLTHSAEELKKFKKSIDQEPLRRKAVEDFIDEVGYRIEDFSAIAARGGVLEPVPGGTYVVDEYMVDYLINRSPVDHVSNLAAVISYKLGKPYGIPCFVVDPVSVDEMCDEARFSGIPEIERKSYSHALNIKAVLRKVSREMGKTPEEVKIVVAHLGSGISVCACKNGKIIDVNNANDEGPFSIERTGELPVGDVVKTAYSSKHSAAELKEEFTKKGGLLAYLGTKDLRKALDSMETSRKAKLVVEAMAYQIAKEIGGMCAVLGDKPDAIVITGGMAHENRFVRMITDYIEKFGKVEVIPGELEMEALALGVLRVLRGEEKAKDYRSVIE.

The protein belongs to the acetokinase family.

The protein localises to the cytoplasm. The catalysed reaction is butanoate + ATP = butanoyl phosphate + ADP. The polypeptide is Probable butyrate kinase (Thermotoga petrophila (strain ATCC BAA-488 / DSM 13995 / JCM 10881 / RKU-1)).